Consider the following 792-residue polypeptide: Probable exo-1,4-beta-xylosidase xlnD (792 aa).

The N-terminal stretch at 1 to 20 (MSAIKSIATVLAAILPSVLA) is a signal peptide. N-linked (GlcNAc...) asparagine glycosylation is found at asparagine 23, asparagine 87, asparagine 142, and asparagine 246. Residue aspartate 310 is part of the active site. N-linked (GlcNAc...) asparagine glycans are attached at residues asparagine 326, asparagine 385, asparagine 391, asparagine 404, asparagine 438, asparagine 475, asparagine 479, asparagine 516, asparagine 677, and asparagine 699.

Belongs to the glycosyl hydrolase 3 family.

It is found in the secreted. The enzyme catalyses Hydrolysis of (1-&gt;4)-beta-D-xylans, to remove successive D-xylose residues from the non-reducing termini.. Its pathway is glycan degradation; xylan degradation. Its function is as follows. Xylan 1,4-beta-xylosidase involved in the hydrolysis of xylan, a major structural heterogeneous polysaccharide found in plant biomass representing the second most abundant polysaccharide in the biosphere, after cellulose. The protein is Probable exo-1,4-beta-xylosidase xlnD (xlnD) of Aspergillus clavatus (strain ATCC 1007 / CBS 513.65 / DSM 816 / NCTC 3887 / NRRL 1 / QM 1276 / 107).